Consider the following 592-residue polypeptide: Tetrathionate sensor histidine kinase TtrS (592 aa).

2 helical membrane-spanning segments follow: residues 11-31 (VLAA…NIGI) and 307-327 (VGGV…VMLL). The Histidine kinase domain occupies 364-581 (GFAHELNQPL…VVTIHFLHEN (218 aa)). A Phosphohistidine; by autocatalysis modification is found at His-367.

In terms of processing, autophosphorylated.

The protein localises to the cell inner membrane. It carries out the reaction ATP + protein L-histidine = ADP + protein N-phospho-L-histidine.. Member of the two-component regulatory system TtrR/TtrS, which is required for synthesis of tetrathionate reductase. Probably functions as a sensor protein kinase which is autophosphorylated at a histidine residue in response to tetrathionate, and transfers its phosphate group to TtrR. During mice infection, the ability to use tetrathionate as an electron acceptor is a growth advantage for S.typhimurium over the competing microbiota in the lumen of the inflamed gut. The polypeptide is Tetrathionate sensor histidine kinase TtrS (ttrS) (Salmonella typhimurium (strain LT2 / SGSC1412 / ATCC 700720)).